The chain runs to 290 residues: HTH-type transcriptional activator RhaR (290 aa).

Residues 179 to 277 (DLIMSALQQS…GMTPRDYRQR (99 aa)) enclose the HTH araC/xylS-type domain. 2 DNA-binding regions (H-T-H motif) span residues 196–217 (ADFCHKNQLVERSLKQLFRQQT) and 244–267 (ISDIAARCGFEDSNYFSAVFTREA).

In terms of assembly, binds DNA as a dimer.

It localises to the cytoplasm. Functionally, activates expression of the rhaSR operon in response to L-rhamnose. This Yersinia pseudotuberculosis serotype O:1b (strain IP 31758) protein is HTH-type transcriptional activator RhaR.